The following is a 106-amino-acid chain: uncharacterized protein (106 aa).

Residues 78 to 98 (LAITGYVVSIPIVLPILIIFI) traverse the membrane as a helical segment.

It localises to the membrane. This is an uncharacterized protein from Haemophilus influenzae (strain ATCC 51907 / DSM 11121 / KW20 / Rd).